The following is a 231-amino-acid chain: Ribonuclease HII (231 aa).

Positions 33–222 constitute an RNase H type-2 domain; that stretch reads WPVAGADEAG…FREAQEQPLA (190 aa). Positions 39, 40, and 130 each coordinate a divalent metal cation.

Belongs to the RNase HII family. Mn(2+) is required as a cofactor. It depends on Mg(2+) as a cofactor.

Its subcellular location is the cytoplasm. The enzyme catalyses Endonucleolytic cleavage to 5'-phosphomonoester.. In terms of biological role, endonuclease that specifically degrades the RNA of RNA-DNA hybrids. The chain is Ribonuclease HII from Sinorhizobium fredii (strain NBRC 101917 / NGR234).